The chain runs to 310 residues: tRNA methyltransferase 10 homolog B (310 aa).

The stretch at 55–94 (RKQRNWERRLEVKKSKRKEEKLRKKLNRQDKDVSDAQLSK) forms a coiled coil. Residues 101–298 (TKERLEGARA…AGIPPGKGFV (198 aa)) enclose the SAM-dependent MTase TRM10-type domain.

This sequence belongs to the class IV-like SAM-binding methyltransferase superfamily. TRM10 family.

It carries out the reaction guanosine(9) in tRNA + S-adenosyl-L-methionine = N(1)-methylguanosine(9) in tRNA + S-adenosyl-L-homocysteine + H(+). In terms of biological role, S-adenosyl-L-methionine-dependent guanine N(1)-methyltransferase that catalyzes the formation of N(1)-methylguanine at position 9 (m1G9) in tRNAs. Probably not able to catalyze formation of N(1)-methyladenine at position 9 (m1A9) in tRNAs. This is tRNA methyltransferase 10 homolog B (trmt10b) from Danio rerio (Zebrafish).